Consider the following 392-residue polypeptide: uncharacterized protein (392 aa).

This sequence belongs to the hcp1 family.

This is an uncharacterized protein from Escherichia coli (strain K12).